A 504-amino-acid chain; its full sequence is Cytochrome P450 3A41 (504 aa).

C443 lines the heme pocket.

Belongs to the cytochrome P450 family. Requires heme as cofactor. As to expression, expressed in liver. Also expressed in the kidneys of female mice, with traces in the stomach, ovary, and heart of female mice and in the testis of male mice.

It is found in the endoplasmic reticulum membrane. The protein localises to the microsome membrane. The catalysed reaction is an organic molecule + reduced [NADPH--hemoprotein reductase] + O2 = an alcohol + oxidized [NADPH--hemoprotein reductase] + H2O + H(+). The sequence is that of Cytochrome P450 3A41 (Cyp3a41a) from Mus musculus (Mouse).